Reading from the N-terminus, the 274-residue chain is 2,3,4,5-tetrahydropyridine-2,6-dicarboxylate N-succinyltransferase (274 aa).

Residues Arg104 and Asp141 each coordinate substrate.

This sequence belongs to the transferase hexapeptide repeat family. In terms of assembly, homotrimer.

Its subcellular location is the cytoplasm. The catalysed reaction is (S)-2,3,4,5-tetrahydrodipicolinate + succinyl-CoA + H2O = (S)-2-succinylamino-6-oxoheptanedioate + CoA. It participates in amino-acid biosynthesis; L-lysine biosynthesis via DAP pathway; LL-2,6-diaminopimelate from (S)-tetrahydrodipicolinate (succinylase route): step 1/3. The protein is 2,3,4,5-tetrahydropyridine-2,6-dicarboxylate N-succinyltransferase of Shewanella baltica (strain OS155 / ATCC BAA-1091).